The primary structure comprises 312 residues: Malate dehydrogenase (312 aa).

Residues 12–17 (GAGFTG) and D36 each bind NAD(+). Residues R87 and R93 each contribute to the substrate site. Residues N100 and 123–125 (LTN) each bind NAD(+). N125 provides a ligand contact to substrate. S149 carries the phosphoserine modification. Substrate is bound at residue R156. H180 serves as the catalytic Proton acceptor.

Belongs to the LDH/MDH superfamily. MDH type 3 family.

It catalyses the reaction (S)-malate + NAD(+) = oxaloacetate + NADH + H(+). In terms of biological role, catalyzes the reversible oxidation of malate to oxaloacetate. This Bacillus cereus (strain ATCC 14579 / DSM 31 / CCUG 7414 / JCM 2152 / NBRC 15305 / NCIMB 9373 / NCTC 2599 / NRRL B-3711) protein is Malate dehydrogenase.